The sequence spans 155 residues: SsrA-binding protein (155 aa).

The tract at residues lysine 135–histidine 155 is disordered.

This sequence belongs to the SmpB family.

It is found in the cytoplasm. Its function is as follows. Required for rescue of stalled ribosomes mediated by trans-translation. Binds to transfer-messenger RNA (tmRNA), required for stable association of tmRNA with ribosomes. tmRNA and SmpB together mimic tRNA shape, replacing the anticodon stem-loop with SmpB. tmRNA is encoded by the ssrA gene; the 2 termini fold to resemble tRNA(Ala) and it encodes a 'tag peptide', a short internal open reading frame. During trans-translation Ala-aminoacylated tmRNA acts like a tRNA, entering the A-site of stalled ribosomes, displacing the stalled mRNA. The ribosome then switches to translate the ORF on the tmRNA; the nascent peptide is terminated with the 'tag peptide' encoded by the tmRNA and targeted for degradation. The ribosome is freed to recommence translation, which seems to be the essential function of trans-translation. This Oleidesulfovibrio alaskensis (strain ATCC BAA-1058 / DSM 17464 / G20) (Desulfovibrio alaskensis) protein is SsrA-binding protein.